Consider the following 186-residue polypeptide: Dual-action ribosomal maturation protein DarP (186 aa).

Belongs to the DarP family.

The protein resides in the cytoplasm. Member of a network of 50S ribosomal subunit biogenesis factors which assembles along the 30S-50S interface, preventing incorrect 23S rRNA structures from forming. Promotes peptidyl transferase center (PTC) maturation. The chain is Dual-action ribosomal maturation protein DarP from Proteus mirabilis (strain HI4320).